A 987-amino-acid polypeptide reads, in one-letter code: Ras guanine nucleotide exchange factor efc25 (987 aa).

The segment covering 1-10 has biased composition (basic and acidic residues); the sequence is MRRPNLDRLR. Disordered regions lie at residues 1–50, 100–130, and 529–552; these read MRRP…STMS, FSST…PEIR, and NANT…ISRS. The segment covering 19–39 has biased composition (low complexity); it reads TSVSKPSTPSYSTYSLSPTFS. Polar residues-rich tracts occupy residues 40–50, 102–111, and 540–552; these read DKSVLSPSTMS, STHSLTRQPS, and RQTN…ISRS. Residue Ser-552 is modified to Phosphoserine. The region spanning 590-723 is the N-terminal Ras-GEF domain; it reads SDNNVKGGTL…VILSEIDNLW (134 aa). A Ras-GEF domain is found at 752–985; that stretch reads TPEEFASQMT…FDKSLSLEPR (234 aa).

The protein localises to the cytoplasm. Has a role in chromosome segregation and cell morphology upstream of the ras1-scd1 pathway. Promotes the exchange of ras1-bound GDP by GTP leading to its activation. In Schizosaccharomyces pombe (strain 972 / ATCC 24843) (Fission yeast), this protein is Ras guanine nucleotide exchange factor efc25 (efc25).